The primary structure comprises 670 residues: Probable potassium transport system protein Kup 1 (670 aa).

13 consecutive transmembrane segments (helical) span residues 14–34 (GAGF…SPLY), 58–78 (LSLI…WIAL), 101–121 (WLII…ALTP), 147–167 (LPIV…QRFG), 175–195 (FGPV…INLF), 196–216 (GDFS…LLSP), 220–240 (AGIF…ALYS), 252–272 (VSWP…GAWL), 294–314 (LIIF…QALI), 345–365 (LYIP…VVYF), 374–394 (AYGL…TVYL), 403–423 (VLVG…FAAS), and 427–447 (FMHG…VMAI).

This sequence belongs to the HAK/KUP transporter (TC 2.A.72) family.

Its subcellular location is the cell membrane. It catalyses the reaction K(+)(in) + H(+)(in) = K(+)(out) + H(+)(out). Functionally, transport of potassium into the cell. Likely operates as a K(+):H(+) symporter. The sequence is that of Probable potassium transport system protein Kup 1 from Lactococcus lactis subsp. lactis (strain IL1403) (Streptococcus lactis).